A 35-amino-acid chain; its full sequence is MEALVYTFLLVGTLGIIFFAIFFREPPKVPSKGKK.

Residues 3–23 (ALVYTFLLVGTLGIIFFAIFF) form a helical membrane-spanning segment.

Belongs to the PsbT family. PSII is composed of 1 copy each of membrane proteins PsbA, PsbB, PsbC, PsbD, PsbE, PsbF, PsbH, PsbI, PsbJ, PsbK, PsbL, PsbM, PsbT, PsbY, PsbZ, Psb30/Ycf12, at least 3 peripheral proteins of the oxygen-evolving complex and a large number of cofactors. It forms dimeric complexes.

The protein resides in the plastid. Its subcellular location is the chloroplast thylakoid membrane. Found at the monomer-monomer interface of the photosystem II (PS II) dimer, plays a role in assembly and dimerization of PSII. PSII is a light-driven water plastoquinone oxidoreductase, using light energy to abstract electrons from H(2)O, generating a proton gradient subsequently used for ATP formation. In Marchantia polymorpha (Common liverwort), this protein is Photosystem II reaction center protein T.